The following is a 600-amino-acid chain: Elongation factor 4 (600 aa).

The tr-type G domain maps to 5–187; the sequence is KYIRNFSIIA…AIVNKLPPPK (183 aa). Residues 17-22 and 134-137 contribute to the GTP site; these read DHGKST and NKID.

This sequence belongs to the TRAFAC class translation factor GTPase superfamily. Classic translation factor GTPase family. LepA subfamily.

The protein localises to the cell inner membrane. It carries out the reaction GTP + H2O = GDP + phosphate + H(+). Functionally, required for accurate and efficient protein synthesis under certain stress conditions. May act as a fidelity factor of the translation reaction, by catalyzing a one-codon backward translocation of tRNAs on improperly translocated ribosomes. Back-translocation proceeds from a post-translocation (POST) complex to a pre-translocation (PRE) complex, thus giving elongation factor G a second chance to translocate the tRNAs correctly. Binds to ribosomes in a GTP-dependent manner. In Rickettsia felis (strain ATCC VR-1525 / URRWXCal2) (Rickettsia azadi), this protein is Elongation factor 4.